A 298-amino-acid polypeptide reads, in one-letter code: Aspartate carbamoyltransferase catalytic subunit (298 aa).

Arg-50 and Thr-51 together coordinate carbamoyl phosphate. Position 79 (Lys-79) interacts with L-aspartate. 3 residues coordinate carbamoyl phosphate: Arg-100, His-128, and Gln-131. 2 residues coordinate L-aspartate: Arg-161 and Arg-220. Residues Leu-259 and Pro-260 each coordinate carbamoyl phosphate.

The protein belongs to the aspartate/ornithine carbamoyltransferase superfamily. ATCase family. Heterooligomer of catalytic and regulatory chains.

It catalyses the reaction carbamoyl phosphate + L-aspartate = N-carbamoyl-L-aspartate + phosphate + H(+). It functions in the pathway pyrimidine metabolism; UMP biosynthesis via de novo pathway; (S)-dihydroorotate from bicarbonate: step 2/3. Catalyzes the condensation of carbamoyl phosphate and aspartate to form carbamoyl aspartate and inorganic phosphate, the committed step in the de novo pyrimidine nucleotide biosynthesis pathway. In Sulfurisphaera tokodaii (strain DSM 16993 / JCM 10545 / NBRC 100140 / 7) (Sulfolobus tokodaii), this protein is Aspartate carbamoyltransferase catalytic subunit.